A 1105-amino-acid chain; its full sequence is SWI/SNF complex subunit SMARCC1 (1105 aa).

The residue at position 2 (A2) is an N-acetylalanine. Residues 28 to 302 form a marR-like, BRCT and chromo domains module region; it reads LAVYRRKDGG…PVSFRQRIST (275 aa). Residues 38–164 enclose the MarR-like domain; it reads PATKFWESPE…IEKTLVQNNC (127 aa). A BRCT; N-terminus domain is found at 168–211; that stretch reads PNIYLIPDIDLKLANKLKDIIKRHQGTFTDEKSKASHHIYPYSS. A Glycyl lysine isopeptide (Lys-Gly) (interchain with G-Cter in SUMO2) cross-link involves residue K179. Residues 217–245 enclose the Chromo domain; sequence EWLRPVMRKEKQVLVHWGFYPDSYDTWVH. The BRCT; C-terminus domain maps to 261-285; sequence KPWKVHVKWILDTDIFNEWMNEEDY. The disordered stretch occupies residues 296-439; it reads FRQRISTKNE…DQSRSVDLGE (144 aa). The span at 302-318 shows a compositional bias: basic and acidic residues; it reads TKNEEPVRSPERRDRKA. A phosphoserine mark is found at S310, S328, and S330. T335 carries the post-translational modification Phosphothreonine. N6-acetyllysine occurs at positions 345 and 346. S350 carries the phosphoserine modification. K354 is modified (N6-acetyllysine). S357 is modified (phosphoserine). The residue at position 359 (K359) is an N6-acetyllysine; alternate. K359 is covalently cross-linked (Glycyl lysine isopeptide (Lys-Gly) (interchain with G-Cter in SUMO2); alternate). Position 398 is a phosphothreonine (T398). The SWIRM domain maps to 449–546; sequence IIIPSYASWF…YQVDPESRPM (98 aa). Phosphoserine is present on S573. K592 is covalently cross-linked (Glycyl lysine isopeptide (Lys-Gly) (interchain with G-Cter in SUMO2)). The region spanning 618-669 is the SANT domain; sequence SAGREWTEQETLLLLEALEMYKDDWNKVSEHVGSRTQDECILHFLRLPIEDP. K739 participates in a covalent cross-link: Glycyl lysine isopeptide (Lys-Gly) (interchain with G-Cter in SUMO2). A disordered region spans residues 745-860; sequence ARASGKVDPT…DTGKKKVEHE (116 aa). A compositionally biased stretch (acidic residues) spans 776-785; the sequence is AEEEKMEADP. Positions 789–860 are enriched in basic and acidic residues; that stretch reads QPEKAENKVE…DTGKKKVEHE (72 aa). K796 is covalently cross-linked (Glycyl lysine isopeptide (Lys-Gly) (interchain with G-Cter in SUMO2)). S822 and S825 each carry phosphoserine. Glycyl lysine isopeptide (Lys-Gly) (interchain with G-Cter in SUMO2) cross-links involve residues K829 and K856. Residues 914–946 are a coiled coil; sequence FEELETIMDREKEALEQQRQQLLTERQNFHMEQ. K948 is subject to N6-acetyllysine. Disordered stretches follow at residues 956-1028 and 1041-1105; these read QQME…PGQH and IHPS…SAAP. Residues 957-993 are compositionally biased toward low complexity; it reads QMEQQQHGQNPQQAHQHSGGPGLAPLGAAGHPGMMPH. Pro residues-rich tracts occupy residues 994–1017 and 1048–1057; these read QQPP…PGQI and PTPPGMPPMP. R1064 is subject to Asymmetric dimethylarginine. The span at 1073–1105 shows a compositional bias: pro residues; sequence MYPPPPQQQPPPPPPADGVPPPPAPGPPASAAP.

The protein belongs to the SMARCC family. Component of the multiprotein chromatin-remodeling complexes SWI/SNF: SWI/SNF-A (BAF), SWI/SNF-B (PBAF) and related complexes. The canonical complex contains a catalytic subunit (either SMARCA4/BRG1/BAF190A or SMARCA2/BRM/BAF190B) and at least SMARCE1, ACTL6A/BAF53, SMARCC1/BAF155, SMARCC2/BAF170, and SMARCB1/SNF5/BAF47. Other subunits specific to each of the complexes may also be present permitting several possible combinations developmentally and tissue specific. Component of the BAF complex, which includes at least actin (ACTB), ARID1A/BAF250A, ARID1B/BAF250B, SMARCA2/BRM, SMARCA4/BRG1, ACTL6A/BAF53, ACTL6B/BAF53B, SMARCE1/BAF57, SMARCC1/BAF155, SMARCC2/BAF170, SMARCB1/SNF5/INI1, and one or more SMARCD1/BAF60A, SMARCD2/BAF60B, or SMARCD3/BAF60C. In muscle cells, the BAF complex also contains DPF3. Component of neural progenitors-specific chromatin remodeling complex (npBAF complex) composed of at least, ARID1A/BAF250A or ARID1B/BAF250B, SMARCD1/BAF60A, SMARCD3/BAF60C, SMARCA2/BRM/BAF190B, SMARCA4/BRG1/BAF190A, SMARCB1/BAF47, SMARCC1/BAF155, SMARCE1/BAF57, SMARCC2/BAF170, PHF10/BAF45A, ACTL6A/BAF53A and actin. Component of neuron-specific chromatin remodeling complex (nBAF complex) composed of at least, ARID1A/BAF250A or ARID1B/BAF250B, SMARCD1/BAF60A, SMARCD3/BAF60C, SMARCA2/BRM/BAF190B, SMARCA4/BRG1/BAF190A, SMARCB1/BAF47, SMARCC1/BAF155, SMARCE1/BAF57, SMARCC2/BAF170, DPF1/BAF45B, DPF3/BAF45C, ACTL6B/BAF53B and actin. Component of the SWI/SNF-B (PBAF) chromatin remodeling complex, at least composed of SMARCA4/BRG1, SMARCB1/BAF47/SNF5, ACTL6A/BAF53A or ACTL6B/BAF53B, SMARCE1/BAF57, SMARCD1/BAF60A, SMARCD2/BAF60B, perhaps SMARCD3/BAF60C, SMARCC1/BAF155, SMARCC2/BAF170, PBRM1/BAF180, ARID2/BAF200 and actin. Component of SWI/SNF (GBAF) subcomplex, which includes at least BICRA or BICRAL (mutually exclusive), BRD9, SS18, SMARCA2/BRM, SMARCA4/BRG1/BAF190A, ACTL6A/BAF53, SMARCC1/BAF155, and SMARCD1/BAF60A. May also interact with the SIN3A histone deacetylase transcription repressor complex in conjunction with SMARCA2 and SMARCA4. The minimal complex composed of SMARCC1 and SMARCA4 seems to be able to associate with cyclin such as CCNE1 or transcription factors such as KLF1 or GATA1. Interacts with NR3C1 and SMARD1. Interacts with TRIP12; leading to disrupt interaction between TRIP12 and SMARCE1 and prevent SMARCE1 ubiquitination. Interacts with CEBPB (when not methylated). Interacts with KDM6B. Interacts with MKKS; the interaction takes place predominantly in the cytoplasm and may modulate SMARCC1 location. Interacts with DPF2. Interacts with PRDM1/BLIMP1. Interacts with DPF3a (isoform 2 of DPF3/BAF45C) and with HDGFL2 in a DPF3a-dependent manner. In terms of processing, phosphorylated on undefined residues at the G2/M transition by ERK1 and other kinases. This may contribute to cell cycle specific inactivation of remodeling complexes containing the phosphorylated protein. In terms of tissue distribution, expressed in brain, heart, muscle, placenta, lung, liver, muscle, kidney and pancreas.

The protein resides in the nucleus. Its subcellular location is the cytoplasm. Its function is as follows. Involved in transcriptional activation and repression of select genes by chromatin remodeling (alteration of DNA-nucleosome topology). Component of SWI/SNF chromatin remodeling complexes that carry out key enzymatic activities, changing chromatin structure by altering DNA-histone contacts within a nucleosome in an ATP-dependent manner. May stimulate the ATPase activity of the catalytic subunit of the complex. Belongs to the neural progenitors-specific chromatin remodeling complex (npBAF complex) and the neuron-specific chromatin remodeling complex (nBAF complex). During neural development a switch from a stem/progenitor to a postmitotic chromatin remodeling mechanism occurs as neurons exit the cell cycle and become committed to their adult state. The transition from proliferating neural stem/progenitor cells to postmitotic neurons requires a switch in subunit composition of the npBAF and nBAF complexes. As neural progenitors exit mitosis and differentiate into neurons, npBAF complexes which contain ACTL6A/BAF53A and PHF10/BAF45A, are exchanged for homologous alternative ACTL6B/BAF53B and DPF1/BAF45B or DPF3/BAF45C subunits in neuron-specific complexes (nBAF). The npBAF complex is essential for the self-renewal/proliferative capacity of the multipotent neural stem cells. The nBAF complex along with CREST plays a role regulating the activity of genes essential for dendrite growth. This chain is SWI/SNF complex subunit SMARCC1, found in Homo sapiens (Human).